The sequence spans 29 residues: U-homostoxin-Hdu1a (29 aa).

O-linked (GlcNAc...) threonine glycosylation occurs at Thr-1. Intrachain disulfides connect Cys-7/Cys-19 and Cys-10/Cys-25.

This sequence belongs to the sea anemone BBH family.

The protein localises to the secreted. It is found in the nematocyst. This Homostichanthus duerdeni (Sea anemone) protein is U-homostoxin-Hdu1a.